Reading from the N-terminus, the 411-residue chain is GPI-anchor transamidase (411 aa).

The first 22 residues, 1–22, serve as a signal peptide directing secretion; sequence MRIAMHLPLLLLYIFLLPLSGA. The Lumenal portion of the chain corresponds to 23-376; it reads NNTDAAHEVI…DIDSNECFFT (354 aa). Residues His-157 and Cys-199 contribute to the active site. N-linked (GlcNAc...) asparagine glycans are attached at residues Asn-256 and Asn-346. A helical transmembrane segment spans residues 377-397; sequence SFKQSATIILALIVTILWFML. Topologically, residues 398–411 are cytoplasmic; that stretch reads RGNTAKATYDLYTN.

It belongs to the peptidase C13 family. As to quaternary structure, forms a complex with CDC91, GPI16, GPI17 and GAA1. In terms of processing, the disulfide bond between GPI8 and GPI16 is important for normal enzyme activity.

The protein localises to the endoplasmic reticulum membrane. It functions in the pathway glycolipid biosynthesis; glycosylphosphatidylinositol-anchor biosynthesis. Its function is as follows. Mediates GPI anchoring in the endoplasmic reticulum, by replacing a protein's C-terminal GPI attachment signal peptide with a pre-assembled GPI. During this transamidation reaction, the GPI transamidase forms a carbonyl intermediate with the substrate protein. The polypeptide is GPI-anchor transamidase (GPI8) (Saccharomyces cerevisiae (strain ATCC 204508 / S288c) (Baker's yeast)).